Here is a 200-residue protein sequence, read N- to C-terminus: Recombination protein RecR (200 aa).

Residues 57–72 form a C4-type zinc finger; it reads CRQCRTLTEQELCPQC. A Toprim domain is found at 80 to 175; that stretch reads TQLCVVEGPT…VASRIAHGVP (96 aa).

Belongs to the RecR family.

May play a role in DNA repair. It seems to be involved in an RecBC-independent recombinational process of DNA repair. It may act with RecF and RecO. The sequence is that of Recombination protein RecR from Pseudomonas putida (strain ATCC 700007 / DSM 6899 / JCM 31910 / BCRC 17059 / LMG 24140 / F1).